The primary structure comprises 249 residues: 1-(5-phosphoribosyl)-5-[(5-phosphoribosylamino)methylideneamino] imidazole-4-carboxamide isomerase (249 aa).

The Proton acceptor role is filled by aspartate 10. Aspartate 131 acts as the Proton donor in catalysis.

This sequence belongs to the HisA/HisF family.

The protein localises to the cytoplasm. The catalysed reaction is 1-(5-phospho-beta-D-ribosyl)-5-[(5-phospho-beta-D-ribosylamino)methylideneamino]imidazole-4-carboxamide = 5-[(5-phospho-1-deoxy-D-ribulos-1-ylimino)methylamino]-1-(5-phospho-beta-D-ribosyl)imidazole-4-carboxamide. Its pathway is amino-acid biosynthesis; L-histidine biosynthesis; L-histidine from 5-phospho-alpha-D-ribose 1-diphosphate: step 4/9. This is 1-(5-phosphoribosyl)-5-[(5-phosphoribosylamino)methylideneamino] imidazole-4-carboxamide isomerase from Brevibacillus brevis (strain 47 / JCM 6285 / NBRC 100599).